The primary structure comprises 375 residues: Cytochrome P450 monooxygenase ACRTS1 (375 aa).

Position 321 (Cys321) interacts with heme.

It belongs to the cytochrome P450 family. Heme is required as a cofactor.

The protein operates within mycotoxin biosynthesis. Its function is as follows. Cytochrome P450 monooxygenase; part of the gene cluster that mediates the biosynthesis of the host-selective toxins (HSTs) ACR-toxins responsible for brown spot of rough lemon disease by the rough lemon pathotype. ACR-toxins cause uncoupling of mitochondrial oxidative-phosphorylation similar to that of classic protonophore. The structure of the major form of ACR-toxin (ACR-toxin I) consists of an alpha-dihydropyrone ring in a 19-carbon polyalcohol, a typical polyketide structure. Minor toxins were characterized as having a pyrone ring with polyalcohol side chains different in length and showing weaker toxicity. The highly reducing polyketide synthase ACRTS2 has all necessary enzymatic domains for multiple cycles of condensation and beta-keto processing. The cytochrome P450 monooxygenase ACRTS1 has also been shown to be essential for ACR-toxin biosynthesis, however its exact role in the pathway has not been elucidated yet. The protein is Cytochrome P450 monooxygenase ACRTS1 of Alternaria alternata (Alternaria rot fungus).